We begin with the raw amino-acid sequence, 498 residues long: ATP synthase subunit beta, chloroplastic (498 aa).

172 to 179 (GGAGVGKT) provides a ligand contact to ATP.

The protein belongs to the ATPase alpha/beta chains family. In terms of assembly, F-type ATPases have 2 components, CF(1) - the catalytic core - and CF(0) - the membrane proton channel. CF(1) has five subunits: alpha(3), beta(3), gamma(1), delta(1), epsilon(1). CF(0) has four main subunits: a(1), b(1), b'(1) and c(9-12).

Its subcellular location is the plastid. It localises to the chloroplast thylakoid membrane. The catalysed reaction is ATP + H2O + 4 H(+)(in) = ADP + phosphate + 5 H(+)(out). Its function is as follows. Produces ATP from ADP in the presence of a proton gradient across the membrane. The catalytic sites are hosted primarily by the beta subunits. The chain is ATP synthase subunit beta, chloroplastic from Citrus sinensis (Sweet orange).